The primary structure comprises 328 residues: GTP 3',8-cyclase (328 aa).

Residues 1 to 229 (MNQVDYLRIS…DAQVRGSGPA (229 aa)) form the Radical SAM core domain. Arg-8 is a GTP binding site. 2 residues coordinate [4Fe-4S] cluster: Cys-15 and Cys-19. S-adenosyl-L-methionine is bound at residue Tyr-21. Cys-22 lines the [4Fe-4S] cluster pocket. Arg-60 serves as a coordination point for GTP. Gly-64 is a binding site for S-adenosyl-L-methionine. Thr-91 provides a ligand contact to GTP. Residue Ser-115 coordinates S-adenosyl-L-methionine. Lys-155 is a GTP binding site. An S-adenosyl-L-methionine-binding site is contributed by Met-189. Positions 252 and 255 each coordinate [4Fe-4S] cluster. 257–259 (RMR) serves as a coordination point for GTP. Cys-269 provides a ligand contact to [4Fe-4S] cluster.

Belongs to the radical SAM superfamily. MoaA family. Monomer and homodimer. [4Fe-4S] cluster is required as a cofactor.

It catalyses the reaction GTP + AH2 + S-adenosyl-L-methionine = (8S)-3',8-cyclo-7,8-dihydroguanosine 5'-triphosphate + 5'-deoxyadenosine + L-methionine + A + H(+). The protein operates within cofactor biosynthesis; molybdopterin biosynthesis. Catalyzes the cyclization of GTP to (8S)-3',8-cyclo-7,8-dihydroguanosine 5'-triphosphate. This Trichormus variabilis (strain ATCC 29413 / PCC 7937) (Anabaena variabilis) protein is GTP 3',8-cyclase.